The sequence spans 465 residues: Cysteine--tRNA ligase (465 aa).

Cysteine 27 is a binding site for Zn(2+). A 'HIGH' region motif is present at residues 29 to 39 (PTVYNFFHIGN). Zn(2+)-binding residues include cysteine 207, histidine 232, and glutamate 236. The 'KMSKS' region motif lies at 264-268 (KMSKS). Lysine 267 serves as a coordination point for ATP.

The protein belongs to the class-I aminoacyl-tRNA synthetase family. As to quaternary structure, monomer. Requires Zn(2+) as cofactor.

The protein localises to the cytoplasm. The catalysed reaction is tRNA(Cys) + L-cysteine + ATP = L-cysteinyl-tRNA(Cys) + AMP + diphosphate. The protein is Cysteine--tRNA ligase of Clostridium botulinum (strain Kyoto / Type A2).